We begin with the raw amino-acid sequence, 150 residues long: UPF0208 membrane protein VV1_2222 (150 aa).

The next 2 membrane-spanning stretches (helical) occupy residues 42 to 62 (FGIKVMPAIAAISVLTQMAFN) and 70 to 90 (AIVMALFALSLPLQGMWWLGH).

It belongs to the UPF0208 family.

Its subcellular location is the cell inner membrane. The protein is UPF0208 membrane protein VV1_2222 of Vibrio vulnificus (strain CMCP6).